The primary structure comprises 262 residues: VPS74-like protein DDB_G0288371 (262 aa).

Belongs to the GOLPH3/VPS74 family.

It localises to the golgi apparatus. Its subcellular location is the golgi stack membrane. Functionally, phosphatidylinositol-4-phosphate-binding protein that links Golgi membranes to the cytoskeleton and may participate in the tensile force required for vesicle budding from the Golgi. Thereby, may play a role in Golgi membrane trafficking. May also bind to the coatomer to regulate Golgi membrane trafficking. May play a role in anterograde transport from the Golgi to the plasma membrane and regulate secretion. May be involved in vacuolar protein sorting. In Dictyostelium discoideum (Social amoeba), this protein is VPS74-like protein DDB_G0288371.